The following is a 212-amino-acid chain: Transcription antitermination protein NusB (212 aa).

Disordered stretches follow at residues 1-34 (MSDEQSTPASGRPPRQSRGGLTSTGARKAASKSN) and 169-212 (EHDR…QAAG). Over residues 178–212 (APAQPAAKADTATDAVADAATDAAAADDAADQAAG) the composition is skewed to low complexity.

The protein belongs to the NusB family.

Its function is as follows. Involved in transcription antitermination. Required for transcription of ribosomal RNA (rRNA) genes. Binds specifically to the boxA antiterminator sequence of the ribosomal RNA (rrn) operons. The polypeptide is Transcription antitermination protein NusB (Delftia acidovorans (strain DSM 14801 / SPH-1)).